Consider the following 99-residue polypeptide: DNA-directed RNA polymerase subunit omega (99 aa).

It belongs to the RNA polymerase subunit omega family. The RNAP catalytic core consists of 2 alpha, 1 beta, 1 beta' and 1 omega subunit. When a sigma factor is associated with the core the holoenzyme is formed, which can initiate transcription.

It carries out the reaction RNA(n) + a ribonucleoside 5'-triphosphate = RNA(n+1) + diphosphate. Promotes RNA polymerase assembly. Latches the N- and C-terminal regions of the beta' subunit thereby facilitating its interaction with the beta and alpha subunits. The chain is DNA-directed RNA polymerase subunit omega from Stenotrophomonas maltophilia (strain K279a).